Here is a 98-residue protein sequence, read N- to C-terminus: Integration host factor subunit alpha (98 aa).

Residues 49-70 form a disordered region; sequence FGNFDLRDKNQRPGRNPKTGED.

The protein belongs to the bacterial histone-like protein family. In terms of assembly, heterodimer of an alpha and a beta chain.

Its function is as follows. This protein is one of the two subunits of integration host factor, a specific DNA-binding protein that functions in genetic recombination as well as in transcriptional and translational control. The protein is Integration host factor subunit alpha of Sodalis glossinidius (strain morsitans).